We begin with the raw amino-acid sequence, 750 residues long: Amyloid-beta A4 precursor protein-binding family A member 2 (750 aa).

Disordered regions lie at residues 1–94 (MAHR…PEEE) and 143–346 (DSVG…IPET). Ser11 carries the phosphoserine modification. Over residues 70–80 (GDSSSDYVNNT) the composition is skewed to polar residues. Residues 81–94 (SEEEDYDEGLPEEE) are compositionally biased toward acidic residues. Residues 185–271 (HYCSSKESYQ…STEACPPSDT (87 aa)) form an STXBP1-binding region. Residue Ser209 is modified to Phosphoserine. Acidic residues predominate over residues 219–228 (DLEEQEEDID). Polar residues-rich tracts occupy residues 238–248 (LSMTSITSASE) and 332–344 (SDLN…NNIP). Positions 367–556 (LIDGIIFAAN…IINTQEMYND (190 aa)) constitute a PID domain. PDZ domains lie at 569 to 654 (ELQL…NIVS) and 660 to 736 (TVLI…MPAA).

Part of a multimeric complex containing STXBP1 and syntaxin-1. Binds to the cytoplasmic domain of amyloid-beta protein, and to the nuclear factor NF-kappa-B/p65 via its PDZ domain. Interacts with the N-terminal domain of NECAB3. As to expression, specifically expressed in neurons, predominantly of the cerebellum, hippocampus, and spinal cord. Lesser extent in neurons of the cerebral cortex and anterior thalmic nuclei.

Functionally, putative function in synaptic vesicle exocytosis by binding to STXBP1, an essential component of the synaptic vesicle exocytotic machinery. May modulate processing of the amyloid-beta precursor protein (APP) and hence formation of APP-beta. This Mus musculus (Mouse) protein is Amyloid-beta A4 precursor protein-binding family A member 2 (Apba2).